The sequence spans 29 residues: Varv peptide F (29 aa).

The cyclopeptide (Gly-Asn) cross-link spans G1–N29. 3 cysteine pairs are disulfide-bonded: C5–C19, C9–C21, and C14–C26.

Post-translationally, this is a cyclic peptide.

In terms of biological role, probably participates in a plant defense mechanism. Has cytotoxic activity against a variety of drug-resistant and drug-sensitive human tumor cell lines. This is Varv peptide F from Viola arvensis (European field pansy).